The primary structure comprises 197 residues: MFTSAIRLSSQRLFASQPSVTAAALRSTATTLPLRSYSQPASLQDSSILTWSDFFKLRKQQRRINVGSSLFTALLGCNVSWAYLSTMEIDPTQMLFGFDPLTVISAGIIASGALGYLLGPIVGSQVFKLSHNQQLAQFNNKNKEFLKHIINNRVDASSQSFSNPVPDYYGEKIGSLKEYKQWLRDCHAYAKKAKEFL.

The transit peptide at 1-14 directs the protein to the mitochondrion; it reads MFTSAIRLSSQRLF. Helical transmembrane passes span 64-84 and 103-123; these read INVGSSLFTALLGCNVSWAYL and VISAGIIASGALGYLLGPIVG.

It belongs to the PAM17 family. In terms of assembly, component of the PAM complex, at least composed of mtHsp70, MGE1, TIM44, PAM16, PAM17 and PAM18/TIM14.

It is found in the mitochondrion inner membrane. In terms of biological role, component of the PAM complex, a complex required for the translocation of transit peptide-containing proteins from the inner membrane into the mitochondrial matrix in an ATP-dependent manner. In the complex, it is required to organize PAM16-PAM18 (TIM16-TIM14) heterodimer. This chain is Presequence translocated-associated motor subunit PAM17, mitochondrial (PAM17), found in Saccharomyces cerevisiae (strain ATCC 204508 / S288c) (Baker's yeast).